The following is a 147-amino-acid chain: Phage-like element PBSX protein XkdM (147 aa).

It to B.subtilis YqbM.

This Bacillus subtilis (strain 168) protein is Phage-like element PBSX protein XkdM (xkdM).